Consider the following 384-residue polypeptide: Endoglucanase (384 aa).

A signal peptide spans 1-25 (MTRRRLLHAGTLAGVAALLPAAALA). Glutamate 63 (proton donor) is an active-site residue. The active-site Nucleophile is the aspartate 124.

This sequence belongs to the glycosyl hydrolase 8 (cellulase D) family.

The protein resides in the secreted. It catalyses the reaction Endohydrolysis of (1-&gt;4)-beta-D-glucosidic linkages in cellulose, lichenin and cereal beta-D-glucans.. The protein operates within glycan metabolism; bacterial cellulose biosynthesis. Hydrolyzes carboxymethylcellulose. In Xanthomonas axonopodis pv. citri (strain 306), this protein is Endoglucanase (bcsZ).